A 245-amino-acid polypeptide reads, in one-letter code: MNSLKFKLTFYTLFGLIWSLLVFFFLSPWYEETLKKDIFELKQYKFSNFLILYDKIEYNKFDYVDGAETYFRDAFGFETKTLEGIMTSIKVLSTLAFLSTTFLIYFTIIFYVHIKFIFDTENHRRLGKKVWCYVLIGSPLVSFFLSFITLFLIIGIPSAVRNDCYKEYGKKFCNSQLRYHTSFIGENQVWLWGPSRGWIILMVDTILTFFATIYCWRNAHKFDEVKMKKKKKNYLNNNNNKNNIL.

4 consecutive transmembrane segments (helical) span residues 10 to 30, 94 to 114, 134 to 154, and 196 to 216; these read FYTLFGLIWSLLVFFFLSPWY, TLAFLSTTFLIYFTIIFYVHI, VLIGSPLVSFFLSFITLFLII, and RGWIILMVDTILTFFATIYCW.

It localises to the membrane. This is an uncharacterized protein from Dictyostelium discoideum (Social amoeba).